The primary structure comprises 206 residues: Alpha-amylase/trypsin inhibitor (206 aa).

Disulfide bonds link cysteine 9–cysteine 205, cysteine 51–cysteine 61, cysteine 66–cysteine 72, cysteine 118–cysteine 194, cysteine 124–cysteine 177, cysteine 132–cysteine 142, cysteine 146–cysteine 155, and cysteine 156–cysteine 164.

The protein belongs to the thaumatin family.

Its function is as follows. Inhibits both trypsin and alpha-amylase. Inhibits the growth of some plant fungal pathogens. The protein is Alpha-amylase/trypsin inhibitor of Zea mays (Maize).